A 182-amino-acid polypeptide reads, in one-letter code: CDP-diacylglycerol--glycerol-3-phosphate 3-phosphatidyltransferase (182 aa).

The Cytoplasmic portion of the chain corresponds to 2-12; sequence QFNIPTLLTLF. Residues 13 to 37 form a helical membrane-spanning segment; it reads RVALIPFFVLAFYLPFVWAPLLCAL. Residues 38–60 lie on the Periplasmic side of the membrane; that stretch reads IFVFAAVTDWFDGFLARRWKQTT. A helical transmembrane segment spans residues 61–81; the sequence is RFGAFLDPVADKVMVAVALVL. The Cytoplasmic segment spans residues 82–86; that stretch reads VAEYY. A helical membrane pass occupies residues 87–107; it reads HSWWITLPAATMIAREIIISA. Residues 108–145 lie on the Periplasmic side of the membrane; the sequence is LREWMAEIGKRSSVAVSWIGKVKTTAQMMALFALLWRP. The helical transmembrane segment at 146–168 threads the bilayer; it reads ERIVEGIGVAALYIAAVLTFWSM. The Cytoplasmic segment spans residues 169–181; it reads FQYLNAARHDLLE.

Belongs to the CDP-alcohol phosphatidyltransferase class-I family.

Its subcellular location is the cell inner membrane. It catalyses the reaction a CDP-1,2-diacyl-sn-glycerol + sn-glycerol 3-phosphate = a 1,2-diacyl-sn-glycero-3-phospho-(1'-sn-glycero-3'-phosphate) + CMP + H(+). It participates in phospholipid metabolism; phosphatidylglycerol biosynthesis; phosphatidylglycerol from CDP-diacylglycerol: step 1/2. Functionally, catalyzes the conversion of cytidine diphosphate diacylglycerol (CDP-DG) and glycerol 3-phosphate into phosphatidylglycerol. Essential for the synthesis of anionic phospholipids, thereby playing a role in balancing the ratio of zwitterionic and anionic phospholipids, which is thought to be important for normal membrane function. In Pectobacterium atrosepticum (strain SCRI 1043 / ATCC BAA-672) (Erwinia carotovora subsp. atroseptica), this protein is CDP-diacylglycerol--glycerol-3-phosphate 3-phosphatidyltransferase.